The sequence spans 475 residues: Sulfate adenylyltransferase subunit 1 (475 aa).

A tr-type G domain is found at 25–239 (KSLLRFLTCG…EVLETVEIQR (215 aa)). A G1 region spans residues 34 to 41 (GSVDDGKS). Residue 34-41 (GSVDDGKS) coordinates GTP. The tract at residues 92–96 (GITID) is G2. Residues 113-116 (DTPG) form a G3 region. GTP contacts are provided by residues 113–117 (DTPGH) and 168–171 (NKMD). The tract at residues 168-171 (NKMD) is G4. Positions 206–208 (SAL) are G5.

This sequence belongs to the TRAFAC class translation factor GTPase superfamily. Classic translation factor GTPase family. CysN/NodQ subfamily. In terms of assembly, heterodimer composed of CysD, the smaller subunit, and CysN.

It carries out the reaction sulfate + ATP + H(+) = adenosine 5'-phosphosulfate + diphosphate. It functions in the pathway sulfur metabolism; hydrogen sulfide biosynthesis; sulfite from sulfate: step 1/3. Its function is as follows. With CysD forms the ATP sulfurylase (ATPS) that catalyzes the adenylation of sulfate producing adenosine 5'-phosphosulfate (APS) and diphosphate, the first enzymatic step in sulfur assimilation pathway. APS synthesis involves the formation of a high-energy phosphoric-sulfuric acid anhydride bond driven by GTP hydrolysis by CysN coupled to ATP hydrolysis by CysD. This chain is Sulfate adenylyltransferase subunit 1, found in Shigella flexneri.